Consider the following 353-residue polypeptide: S-adenosylmethionine:tRNA ribosyltransferase-isomerase (353 aa).

Belongs to the QueA family. Monomer.

The protein resides in the cytoplasm. It carries out the reaction 7-aminomethyl-7-carbaguanosine(34) in tRNA + S-adenosyl-L-methionine = epoxyqueuosine(34) in tRNA + adenine + L-methionine + 2 H(+). It functions in the pathway tRNA modification; tRNA-queuosine biosynthesis. Transfers and isomerizes the ribose moiety from AdoMet to the 7-aminomethyl group of 7-deazaguanine (preQ1-tRNA) to give epoxyqueuosine (oQ-tRNA). In Paraburkholderia phymatum (strain DSM 17167 / CIP 108236 / LMG 21445 / STM815) (Burkholderia phymatum), this protein is S-adenosylmethionine:tRNA ribosyltransferase-isomerase.